We begin with the raw amino-acid sequence, 330 residues long: Biotin synthase (330 aa).

The Radical SAM core domain maps to Asn53–Ser276. Cys68, Cys72, and Cys75 together coordinate [4Fe-4S] cluster. The [2Fe-2S] cluster site is built by Cys112, Cys144, Cys204, and Arg274.

It belongs to the radical SAM superfamily. Biotin synthase family. Homodimer. Requires [4Fe-4S] cluster as cofactor. It depends on [2Fe-2S] cluster as a cofactor.

It carries out the reaction (4R,5S)-dethiobiotin + (sulfur carrier)-SH + 2 reduced [2Fe-2S]-[ferredoxin] + 2 S-adenosyl-L-methionine = (sulfur carrier)-H + biotin + 2 5'-deoxyadenosine + 2 L-methionine + 2 oxidized [2Fe-2S]-[ferredoxin]. The protein operates within cofactor biosynthesis; biotin biosynthesis; biotin from 7,8-diaminononanoate: step 2/2. Functionally, catalyzes the conversion of dethiobiotin (DTB) to biotin by the insertion of a sulfur atom into dethiobiotin via a radical-based mechanism. This chain is Biotin synthase, found in Streptococcus agalactiae serotype III (strain NEM316).